Reading from the N-terminus, the 413-residue chain is Putative F-box/kelch-repeat protein At4g22430 (413 aa).

The F-box domain maps to 5-54 (NNTITDVLEGIVTEILVRLPLRSISRFKSVSQTWKSAIESVYFRRLFVSL). One copy of the Kelch repeat lies at 168-210 (NMFLNKGEMYMPLYVYSSETGFWIHKEVVCPVRLPNFYDPISL).

In Arabidopsis thaliana (Mouse-ear cress), this protein is Putative F-box/kelch-repeat protein At4g22430.